The sequence spans 525 residues: D-arabinono-1,4-lactone oxidase (525 aa).

The FAD-binding PCMH-type domain occupies 20-195 (IYSSRPEWYF…VGATVRVVPA (176 aa)). Position 58 is a pros-8alpha-FAD histidine (His-58).

The protein belongs to the oxygen-dependent FAD-linked oxidoreductase family. FAD serves as cofactor.

It is found in the mitochondrion membrane. The enzyme catalyses D-arabinono-1,4-lactone + O2 = dehydro-D-arabinono-1,4-lactone + H2O2 + H(+). It functions in the pathway cofactor biosynthesis; D-erythroascorbate biosynthesis; dehydro-D-arabinono-1,4-lactone from D-arabinose: step 2/2. This Candida glabrata (strain ATCC 2001 / BCRC 20586 / JCM 3761 / NBRC 0622 / NRRL Y-65 / CBS 138) (Yeast) protein is D-arabinono-1,4-lactone oxidase (ALO1).